The primary structure comprises 378 residues: MYKLICKDGNAKRGEFTTVHGKIQTPVFMNVGTAAAIKGAVSTMDLQEIGTQVELSNTYHLHVRPGDEVVKKLGGLHKFMVWDKPILTDSGGFQVFSLAGLRKIKEEGVYFNSHIDGKKIFMGPEESMRIQSNLASTIAMAFDECPPHPATREYMEDSVARTTRWLLRCKNEMNRLNTLEDTINKHQMLFGINQGGTYTDIRVEHAKRISELDLDGYALGGLAVGESHSEMYRIIEETVPYLPEAKPTYLMGVGTPANILEAVERGVDFFDCVYPARNGRHGHAYTNHGKMNLLNAKYELDDRPIEEGCGCPVCKNYSRGYIRHLLKAKEMLGLRFLVTHNLYFYNKMMEEIREAIENQNFASYKKKKLEGFAAEQGN.

Aspartate 89 (proton acceptor) is an active-site residue. Residues 89–93 (DSGGF), aspartate 143, glutamine 194, and glycine 221 each bind substrate. The tract at residues 252–258 (GVGTPAN) is RNA binding. Aspartate 271 serves as the catalytic Nucleophile. The RNA binding; important for wobble base 34 recognition stretch occupies residues 276-280 (ARNGR). Zn(2+) is bound by residues cysteine 309, cysteine 311, cysteine 314, and histidine 340.

This sequence belongs to the queuine tRNA-ribosyltransferase family. As to quaternary structure, homodimer. Within each dimer, one monomer is responsible for RNA recognition and catalysis, while the other monomer binds to the replacement base PreQ1. Zn(2+) serves as cofactor.

The catalysed reaction is 7-aminomethyl-7-carbaguanine + guanosine(34) in tRNA = 7-aminomethyl-7-carbaguanosine(34) in tRNA + guanine. It participates in tRNA modification; tRNA-queuosine biosynthesis. Functionally, catalyzes the base-exchange of a guanine (G) residue with the queuine precursor 7-aminomethyl-7-deazaguanine (PreQ1) at position 34 (anticodon wobble position) in tRNAs with GU(N) anticodons (tRNA-Asp, -Asn, -His and -Tyr). Catalysis occurs through a double-displacement mechanism. The nucleophile active site attacks the C1' of nucleotide 34 to detach the guanine base from the RNA, forming a covalent enzyme-RNA intermediate. The proton acceptor active site deprotonates the incoming PreQ1, allowing a nucleophilic attack on the C1' of the ribose to form the product. After dissociation, two additional enzymatic reactions on the tRNA convert PreQ1 to queuine (Q), resulting in the hypermodified nucleoside queuosine (7-(((4,5-cis-dihydroxy-2-cyclopenten-1-yl)amino)methyl)-7-deazaguanosine). The chain is Queuine tRNA-ribosyltransferase from Lachnoclostridium phytofermentans (strain ATCC 700394 / DSM 18823 / ISDg) (Clostridium phytofermentans).